Here is a 977-residue protein sequence, read N- to C-terminus: Serine/threonine-protein kinase N2 (977 aa).

REM-1 domains follow at residues 24 to 100 (NLDF…HIVV), 114 to 194 (DTPK…TSEI), and 200 to 280 (DVTT…ELPK). In terms of domain architecture, C2 spans 298–468 (PPNSPRQSIM…LYLEPQGTLF (171 aa)). 2 disordered regions span residues 342–381 (GRSK…LSKS) and 531–576 (AADL…KRNS). Polar residues predominate over residues 358-378 (EARSSFMSRGNKNKSGSSRTL). One can recognise a Protein kinase domain in the interval 650–909 (FKCVAVLGRG…AEEVKRHPFF (260 aa)). Residues 656-664 (LGRGHFGKV) and lysine 679 contribute to the ATP site. Aspartate 775 functions as the Proton acceptor in the catalytic mechanism. An AGC-kinase C-terminal domain is found at 910–977 (RDMDWPGLLA…ADFDYIADWC (68 aa)).

Belongs to the protein kinase superfamily. AGC Ser/Thr protein kinase family. PKC subfamily. Post-translationally, autophosphorylated. Phosphorylated. Proteolytically cleaved.

The protein resides in the cytoplasm. It localises to the nucleus. Its subcellular location is the membrane. The protein localises to the cell projection. It is found in the lamellipodium. The protein resides in the cytoskeleton. It localises to the cleavage furrow. Its subcellular location is the midbody. The protein localises to the cell junction. The catalysed reaction is L-seryl-[protein] + ATP = O-phospho-L-seryl-[protein] + ADP + H(+). It catalyses the reaction L-threonyl-[protein] + ATP = O-phospho-L-threonyl-[protein] + ADP + H(+). With respect to regulation, kinase activity is activated upon binding to GTP-bound Rho/Rac GTPases. Activated by lipids, particularly cardiolipin and to a lesser extent by other acidic phospholipids and unsaturated fatty acids. Two specific sites, Thr-809 (activation loop of the kinase domain) and Thr-951 (turn motif), may be needed to be phosphorylated for its full activation. In terms of biological role, pkc-related serine/threonine-protein kinase and Rho/Rac effector protein that participates in specific signal transduction responses in the cell. May play a role in the regulation of cell cycle progression, actin cytoskeleton assembly, cell migration, cell adhesion and transcription activation signaling processes. This chain is Serine/threonine-protein kinase N2 (pkn2), found in Danio rerio (Zebrafish).